A 1200-amino-acid chain; its full sequence is PAN2-PAN3 deadenylation complex catalytic subunit Pan2 (1200 aa).

4 WD repeats span residues 153–193 (DENE…QKYA), 195–231 (ETPGVTIMRQTNRFFFCGHTSGKVSLRDLRSFKVEHE), 244–280 (VHGNLLAACGFSSRLTGLACDRFLKVYDLRMMRAITP), and 328–367 (PVGPLLMTFDVSASKQALAFGDSEGCVHLWTDSPEPSFNP). Positions 368–484 (YSRETEFALP…PTGREEEPLH (117 aa)) are linker. The USP domain occupies 485 to 923 (TVSKKYRKVT…VPAILYYVKR (439 aa)). Phosphoserine is present on Ser784. Residues 974 to 1146 (VGLDAEFVTL…EDARTALQLY (173 aa)) enclose the Exonuclease domain. Residues Asp977, Glu979, Asp1086, and Asp1138 each contribute to the a divalent metal cation site. Ser1188 bears the Phosphoserine mark.

This sequence belongs to the peptidase C19 family. PAN2 subfamily. As to quaternary structure, forms a heterotrimer with an asymmetric homodimer of the regulatory subunit PAN3 to form the poly(A)-nuclease (PAN) deadenylation complex. Interacts with PAN3 isoform 1/Pan3L and isoform 3/Pan3S. Interacts with ZFP36. The cofactor is a divalent metal cation.

Its subcellular location is the cytoplasm. It localises to the P-body. It is found in the nucleus. The enzyme catalyses Exonucleolytic cleavage of poly(A) to 5'-AMP.. Its activity is regulated as follows. Positively regulated by the regulatory subunit PAN3. Its function is as follows. Catalytic subunit of the poly(A)-nuclease (PAN) deadenylation complex, one of two cytoplasmic mRNA deadenylases involved in general and miRNA-mediated mRNA turnover. PAN specifically shortens poly(A) tails of RNA and the activity is stimulated by poly(A)-binding protein (PABP). PAN deadenylation is followed by rapid degradation of the shortened mRNA tails by the CCR4-NOT complex. Deadenylated mRNAs are then degraded by two alternative mechanisms, namely exosome-mediated 3'-5' exonucleolytic degradation, or deadenylation-dependent mRNA decaping and subsequent 5'-3' exonucleolytic degradation by XRN1. Also acts as an important regulator of the HIF1A-mediated hypoxic response. Required for HIF1A mRNA stability independent of poly(A) tail length regulation. This chain is PAN2-PAN3 deadenylation complex catalytic subunit Pan2, found in Mus musculus (Mouse).